The sequence spans 355 residues: MSGQPKRLMVMAGGTGGHVFPGLAVAHHLMAQGWQVRWLGTSDRMEADLVPKHGIDIDFIRISGLRGKGVKALLAAPLRIFNAWRQARAIMKRFKPDVVLGMGGYVSGPGGLAAWSLGIPVVLHEQNGIAGLTNQWLAKIATTVMQAFPGAFPNAEVVGNPVRTDVLALPLPQVRLAGRDGPIRVLVVGGSQGARVLNQTMPQVAARLGDTVTIWHQSGKGAQLTVEQAYAGAGQPQHKVTEFIDGMAAAYAWADVVVCRSGALTVSEIAAAGLPAIFVPFQHKDRQQYWNALPLENAGAAKIFEQPQFTVEAVADTLAGWSREALLTMAERARAVSIPDATERVASEVSRVART.

UDP-N-acetyl-alpha-D-glucosamine is bound by residues 15 to 17 (TGG), N127, R163, S191, I244, 263 to 268 (ALTVSE), and Q288.

Belongs to the glycosyltransferase 28 family. MurG subfamily.

It localises to the cell inner membrane. The catalysed reaction is di-trans,octa-cis-undecaprenyl diphospho-N-acetyl-alpha-D-muramoyl-L-alanyl-D-glutamyl-meso-2,6-diaminopimeloyl-D-alanyl-D-alanine + UDP-N-acetyl-alpha-D-glucosamine = di-trans,octa-cis-undecaprenyl diphospho-[N-acetyl-alpha-D-glucosaminyl-(1-&gt;4)]-N-acetyl-alpha-D-muramoyl-L-alanyl-D-glutamyl-meso-2,6-diaminopimeloyl-D-alanyl-D-alanine + UDP + H(+). Its pathway is cell wall biogenesis; peptidoglycan biosynthesis. Functionally, cell wall formation. Catalyzes the transfer of a GlcNAc subunit on undecaprenyl-pyrophosphoryl-MurNAc-pentapeptide (lipid intermediate I) to form undecaprenyl-pyrophosphoryl-MurNAc-(pentapeptide)GlcNAc (lipid intermediate II). This chain is UDP-N-acetylglucosamine--N-acetylmuramyl-(pentapeptide) pyrophosphoryl-undecaprenol N-acetylglucosamine transferase, found in Salmonella typhi.